Consider the following 155-residue polypeptide: 6,7-dimethyl-8-ribityllumazine synthase (155 aa).

5-amino-6-(D-ribitylamino)uracil is bound by residues Phe23, 57-59 (AFE), and 81-83 (AVI). Residue 86–87 (ST) participates in (2S)-2-hydroxy-3-oxobutyl phosphate binding. The active-site Proton donor is His89. Phe114 lines the 5-amino-6-(D-ribitylamino)uracil pocket. Arg128 contributes to the (2S)-2-hydroxy-3-oxobutyl phosphate binding site.

Belongs to the DMRL synthase family.

The enzyme catalyses (2S)-2-hydroxy-3-oxobutyl phosphate + 5-amino-6-(D-ribitylamino)uracil = 6,7-dimethyl-8-(1-D-ribityl)lumazine + phosphate + 2 H2O + H(+). Its pathway is cofactor biosynthesis; riboflavin biosynthesis; riboflavin from 2-hydroxy-3-oxobutyl phosphate and 5-amino-6-(D-ribitylamino)uracil: step 1/2. Catalyzes the formation of 6,7-dimethyl-8-ribityllumazine by condensation of 5-amino-6-(D-ribitylamino)uracil with 3,4-dihydroxy-2-butanone 4-phosphate. This is the penultimate step in the biosynthesis of riboflavin. In Trichlorobacter lovleyi (strain ATCC BAA-1151 / DSM 17278 / SZ) (Geobacter lovleyi), this protein is 6,7-dimethyl-8-ribityllumazine synthase.